Here is a 66-residue protein sequence, read N- to C-terminus: Large ribosomal subunit protein bL35 (66 aa).

The protein belongs to the bacterial ribosomal protein bL35 family.

This Synechococcus sp. (strain RCC307) protein is Large ribosomal subunit protein bL35.